Reading from the N-terminus, the 312-residue chain is 2,3-dihydroxyphenylpropionate/2,3-dihydroxicinnamic acid 1,2-dioxygenase (312 aa).

Residue His-115 is the Proton donor of the active site. His-179 serves as the catalytic Proton acceptor.

The protein belongs to the LigB/MhpB extradiol dioxygenase family. In terms of assembly, homotetramer. It depends on Fe(2+) as a cofactor.

The enzyme catalyses 3-(2,3-dihydroxyphenyl)propanoate + O2 = (2Z,4E)-2-hydroxy-6-oxonona-2,4-dienedioate + H(+). It carries out the reaction (2E)-3-(2,3-dihydroxyphenyl)prop-2-enoate + O2 = (2Z,4E,7E)-2-hydroxy-6-oxonona-2,4,7-trienedioate + H(+). The protein operates within aromatic compound metabolism; 3-phenylpropanoate degradation. Its function is as follows. Catalyzes the non-heme iron(II)-dependent oxidative cleavage of 2,3-dihydroxyphenylpropionic acid and 2,3-dihydroxicinnamic acid into 2-hydroxy-6-ketononadienedioate and 2-hydroxy-6-ketononatrienedioate, respectively. This chain is 2,3-dihydroxyphenylpropionate/2,3-dihydroxicinnamic acid 1,2-dioxygenase, found in Azotobacter vinelandii (strain DJ / ATCC BAA-1303).